The primary structure comprises 84 residues: DNA-directed RNA polymerase subunit Rpo5 (84 aa).

It belongs to the archaeal Rpo5/eukaryotic RPB5 RNA polymerase subunit family. As to quaternary structure, part of the 13-subunit RNA polymerase complex.

The protein resides in the cytoplasm. It carries out the reaction RNA(n) + a ribonucleoside 5'-triphosphate = RNA(n+1) + diphosphate. Its function is as follows. DNA-dependent RNA polymerase (RNAP) catalyzes the transcription of DNA into RNA using the four ribonucleoside triphosphates as substrates. The chain is DNA-directed RNA polymerase subunit Rpo5 from Saccharolobus solfataricus (strain ATCC 35092 / DSM 1617 / JCM 11322 / P2) (Sulfolobus solfataricus).